Consider the following 475-residue polypeptide: 1-aminocyclopropane-1-carboxylate synthase CMA101 (475 aa).

Lys-272 is subject to N6-(pyridoxal phosphate)lysine.

This sequence belongs to the class-I pyridoxal-phosphate-dependent aminotransferase family. As to quaternary structure, homodimer. Pyridoxal 5'-phosphate is required as a cofactor.

It catalyses the reaction S-adenosyl-L-methionine = 1-aminocyclopropane-1-carboxylate + S-methyl-5'-thioadenosine + H(+). It participates in alkene biosynthesis; ethylene biosynthesis via S-adenosyl-L-methionine; ethylene from S-adenosyl-L-methionine: step 1/2. Functionally, catalyzes the formation of 1-aminocyclopropane-1-carboxylate, a direct precursor of ethylene in higher plants. This Cucurbita maxima (Pumpkin) protein is 1-aminocyclopropane-1-carboxylate synthase CMA101 (ACS2).